The following is a 197-amino-acid chain: ATP-dependent Clp protease proteolytic subunit 3 (197 aa).

The Nucleophile role is filled by S96. The active site involves H121.

This sequence belongs to the peptidase S14 family. As to quaternary structure, fourteen ClpP subunits assemble into 2 heptameric rings which stack back to back to give a disk-like structure with a central cavity, resembling the structure of eukaryotic proteasomes.

It localises to the cytoplasm. It carries out the reaction Hydrolysis of proteins to small peptides in the presence of ATP and magnesium. alpha-casein is the usual test substrate. In the absence of ATP, only oligopeptides shorter than five residues are hydrolyzed (such as succinyl-Leu-Tyr-|-NHMec, and Leu-Tyr-Leu-|-Tyr-Trp, in which cleavage of the -Tyr-|-Leu- and -Tyr-|-Trp bonds also occurs).. Cleaves peptides in various proteins in a process that requires ATP hydrolysis. Has a chymotrypsin-like activity. Plays a major role in the degradation of misfolded proteins. The protein is ATP-dependent Clp protease proteolytic subunit 3 of Prochlorococcus marinus (strain MIT 9313).